Reading from the N-terminus, the 1406-residue chain is DNA-directed RNA polymerase subunit beta' (1406 aa).

Positions 70, 72, 85, and 88 each coordinate Zn(2+). The Mg(2+) site is built by Asp-460, Asp-462, and Asp-464. Zn(2+) contacts are provided by Cys-814, Cys-888, Cys-895, and Cys-898.

It belongs to the RNA polymerase beta' chain family. The RNAP catalytic core consists of 2 alpha, 1 beta, 1 beta' and 1 omega subunit. When a sigma factor is associated with the core the holoenzyme is formed, which can initiate transcription. Mg(2+) is required as a cofactor. It depends on Zn(2+) as a cofactor.

It catalyses the reaction RNA(n) + a ribonucleoside 5'-triphosphate = RNA(n+1) + diphosphate. Its function is as follows. DNA-dependent RNA polymerase catalyzes the transcription of DNA into RNA using the four ribonucleoside triphosphates as substrates. The sequence is that of DNA-directed RNA polymerase subunit beta' from Colwellia psychrerythraea (strain 34H / ATCC BAA-681) (Vibrio psychroerythus).